The chain runs to 360 residues: MAGHLASDFAFSPPPGGGGDGPGGPEPGWVDPRTWLSFQGPPGGPGIGPGVGPGSEVWGIPPCPPPYEFCGGMAYCGPQVGVGLVPQGGLETSQPEGEAGVGVESNSDGASPEPCTVTPGAVKLEKEKLEQNPEESQDIKALQKELEQFAKLLKQKRITLGYTQADVGLTLGVLFGKVFSQTTICRFEALQLSFKNMCKLRPLLQKWVEEADNNENLQEICKAETLVQARKRKRTSIENRVRGNLENLFLQCPKPTLQQISHIAQQLGLEKDVVRVWFCNRRQKGKRSSSDYAQREDFEAAGSPFSGGPVSFPLAPGPHFGTPGYGSPHFTALYSSVPFPEGEAFPPVSVTTLGSPMHSN.

2 disordered regions span residues 1 to 52 (MAGH…PGVG) and 88 to 114 (GGLE…SPEP). A 9aaTAD motif is present at residues 4 to 12 (HLASDFAFS). The residue at position 111 (Ser111) is a Phosphoserine; by MAPK. Lys123 participates in a covalent cross-link: Glycyl lysine isopeptide (Lys-Gly) (interchain with G-Cter in SUMO). The POU-specific domain maps to 138–212 (DIKALQKELE…LLQKWVEEAD (75 aa)). Residues Arg157 and Gln164 each contribute to the DNA site. DNA-binding stretches follow at residues 180 to 186 (SQTTICR) and 193 to 196 (SFKN). The homeobox DNA-binding region spans 230–289 (RKRKRTSIENRVRGNLENLFLQCPKPTLQQISHIAQQLGLEKDVVRVWFCNRRQKGKRSS). The residue at position 235 (Thr235) is a Phosphothreonine. Phosphoserine is present on residues Ser236, Ser289, Ser290, and Ser355.

The protein belongs to the POU transcription factor family. Class-5 subfamily. In terms of assembly, interacts with PKM. Interacts with WWP2. Interacts with UBE2I and ZSCAN10. Interacts with PCGF1. Interacts with ESRRB; recruits ESRRB near the POU5F1-SOX2 element in the NANOG proximal promoter; the interaction is DNA independent. Interacts with ZNF322. Interacts with MAPK8 and MAPK9; the interaction allows MAPK8 and MAPK9 to phosphorylate POU5F1 on Ser-355. Interacts (when phosphorylated on Ser-355) with FBXW8. Interacts with FBXW4. Interacts with SOX2 and SOX15; binds synergistically with either SOX2 or SOX15 to DNA. Interacts with DDX56. In terms of processing, sumoylation enhances the protein stability, DNA binding and transactivation activity. Sumoylation is required for enhanced YES1 expression. Ubiquitinated; undergoes 'Lys-63'-linked polyubiquitination by WWP2 leading to proteasomal degradation. Post-translationally, ERK1/2-mediated phosphorylation at Ser-111 promotes nuclear exclusion and proteasomal degradation. Phosphorylation at Thr-235 and Ser-236 decrease DNA-binding and alters ability to activate transcription. Expressed in developing brain. Highest levels found in specific cell layers of the cortex, the olfactory bulb, the hippocampus and the cerebellum. Low levels of expression in adult tissues.

It is found in the cytoplasm. Its subcellular location is the nucleus. Functionally, transcription factor that binds to the octamer motif (5'-ATTTGCAT-3'). Forms a trimeric complex with SOX2 or SOX15 on DNA and controls the expression of a number of genes involved in embryonic development such as YES1, FGF4, UTF1 and ZFP206. Critical for early embryogenesis and for embryonic stem cell pluripotency. The sequence is that of POU domain, class 5, transcription factor 1 (POU5F1) from Homo sapiens (Human).